The sequence spans 273 residues: Putative inactive beta-glucuronidase protein GUSBP11 (273 aa).

Residues 1-20 form a disordered region; the sequence is MTAAETGRGKPRLGGGSGLG.

Belongs to the glycosyl hydrolase 2 family.

This Homo sapiens (Human) protein is Putative inactive beta-glucuronidase protein GUSBP11 (GUSBP11).